We begin with the raw amino-acid sequence, 308 residues long: Probable acetylxylan esterase A (308 aa).

An N-terminal signal peptide occupies residues 1-19 (MAPFSFLLTLLLYTLSAGA). The N-linked (GlcNAc...) asparagine glycan is linked to Asn-141. Ser-151 serves as the catalytic Charge relay system. The N-linked (GlcNAc...) asparagine glycan is linked to Asn-193.

It belongs to the carbohydrate esterase 1 (CE1) family. AxeA subfamily. In terms of assembly, monomer.

It is found in the secreted. The catalysed reaction is Deacetylation of xylans and xylo-oligosaccharides.. It participates in glycan degradation; xylan degradation. Acetylxylan esterase involved in the hydrolysis of xylan, a major structural heterogeneous polysaccharide found in plant biomass representing the second most abundant polysaccharide in the biosphere, after cellulose. Degrades acetylated xylans by cleaving acetyl side groups from the hetero-xylan backbone. This chain is Probable acetylxylan esterase A (axeA), found in Aspergillus clavatus (strain ATCC 1007 / CBS 513.65 / DSM 816 / NCTC 3887 / NRRL 1 / QM 1276 / 107).